A 445-amino-acid polypeptide reads, in one-letter code: T-box transcription factor TBX20 (445 aa).

The segment at residues 108–287 is a DNA-binding region (T-box); the sequence is LWDKFHELGT…SNPFAKGFRD (180 aa). Residues 318-337 are disordered; that stretch reads EEDVLGEESQTTQSRGSAFT. A compositionally biased stretch (polar residues) spans 325–337; the sequence is ESQTTQSRGSAFT.

As to expression, prominently expressed in the extraembryonic mesoderm, developing heart, eye analage and motor neurons of hindbrain and spinal cord. Expressed in extraembryonic tissues such as the amnion and allantois.

The protein localises to the nucleus. In terms of biological role, acts as a transcriptional activator and repressor required for cardiac development and may have key roles in the maintenance of functional and structural phenotypes in adult heart. This Mus musculus (Mouse) protein is T-box transcription factor TBX20 (Tbx20).